The chain runs to 30 residues: Root cyclotide 1 (30 aa).

The cyclopeptide (Gly-Asn) cross-link spans 1 to 30; the sequence is GIPCAESCVWIPCTVTALLGCSCSNKVCYN. 3 disulfide bridges follow: Cys-4-Cys-21, Cys-8-Cys-23, and Cys-13-Cys-28.

Post-translationally, this is a cyclic peptide. In terms of tissue distribution, expressed in roots.

Functionally, probably participates in a plant defense mechanism. The sequence is that of Root cyclotide 1 from Viola hederacea (Australian violet).